The primary structure comprises 297 residues: Succinate dehydrogenase [ubiquinone] iron-sulfur subunit, mitochondrial (297 aa).

The tract at residues 33-55 (TAEALSASRPPIKETKTSTVKEP) is disordered. A 2Fe-2S ferredoxin-type domain is found at 78-157 (DKPRMQSYTL…ETRIYPLPHT (80 aa)). Positions 117, 122, 125, and 137 each coordinate [2Fe-2S] cluster. The region spanning 199–229 (DRKKLDGLYECILCACCSTSCPSYWWNSEEY) is the 4Fe-4S ferredoxin-type domain. Residues cysteine 209, cysteine 212, and cysteine 215 each contribute to the [4Fe-4S] cluster site. A [3Fe-4S] cluster-binding site is contributed by cysteine 219. A ubiquinone is bound at residue tryptophan 224. Residues cysteine 266 and cysteine 272 each coordinate [3Fe-4S] cluster. Cysteine 276 provides a ligand contact to [4Fe-4S] cluster.

Belongs to the succinate dehydrogenase/fumarate reductase iron-sulfur protein family. As to quaternary structure, component of complex II composed of four subunits: a flavoprotein (FP), an iron-sulfur protein (IP), and a cytochrome b composed of a large and a small subunit. [2Fe-2S] cluster serves as cofactor. Requires [3Fe-4S] cluster as cofactor. It depends on [4Fe-4S] cluster as a cofactor.

It localises to the mitochondrion inner membrane. The enzyme catalyses a quinone + succinate = fumarate + a quinol. It participates in carbohydrate metabolism; tricarboxylic acid cycle; fumarate from succinate (eukaryal route): step 1/1. Iron-sulfur protein (IP) subunit of succinate dehydrogenase (SDH) that is involved in complex II of the mitochondrial electron transport chain and is responsible for transferring electrons from succinate to ubiquinone (coenzyme Q). The chain is Succinate dehydrogenase [ubiquinone] iron-sulfur subunit, mitochondrial (SDH2) from Zymoseptoria tritici (Speckled leaf blotch fungus).